We begin with the raw amino-acid sequence, 724 residues long: Protein-glutamine gamma-glutamyltransferase 5 (724 aa).

Position 2 is an N-acetylalanine (alanine 2). Catalysis depends on residues cysteine 283, histidine 342, and aspartate 365. The Ca(2+) site is built by asparagine 405, aspartate 407, glutamate 453, and glutamate 458. Composition is skewed to polar residues over residues 473-486 (RSQG…NPFS) and 495-505 (ARSPDSPSLQP). The disordered stretch occupies residues 473-505 (RSQGPHQANSNPFSSVPPRHNSARSPDSPSLQP).

This sequence belongs to the transglutaminase superfamily. Transglutaminase family. Requires Ca(2+) as cofactor.

Its subcellular location is the cytoplasm. The catalysed reaction is L-glutaminyl-[protein] + L-lysyl-[protein] = [protein]-L-lysyl-N(6)-5-L-glutamyl-[protein] + NH4(+). Catalyzes the cross-linking of proteins and the conjugation of polyamines to proteins. Contributes to the formation of the cornified cell envelope of keratinocytes. The protein is Protein-glutamine gamma-glutamyltransferase 5 (Tgm5) of Mus musculus (Mouse).